We begin with the raw amino-acid sequence, 565 residues long: 4-coumarate--CoA ligase-like 2 (565 aa).

Residues S221, S222, G223, T224, T225, and K229 each contribute to the ATP site. F265 contributes to the (E)-4-coumaroyl-AMP binding site. K286 contacts CoA. Residues 288-359 (DMAKLLSAVE…ENYPKVKILQ (72 aa)) form an SBD1 region. The (E)-4-coumaroyl-AMP site is built by G337, Q359, G360, and T364. ATP contacts are provided by Q359, G360, T364, D445, and R460. The segment at 360-424 (GYGLTESTAI…IRSPTVMKGY (65 aa)) is SBD2. K462 and K466 together coordinate (E)-4-coumaroyl-AMP. G469 is a binding site for CoA. K551 is a binding site for ATP. Residues 563 to 565 (SKL) carry the Microbody targeting signal motif.

The protein belongs to the ATP-dependent AMP-binding enzyme family. It depends on Mg(2+) as a cofactor.

It is found in the peroxisome. The enzyme catalyses (E)-4-coumarate + ATP + CoA = (E)-4-coumaroyl-CoA + AMP + diphosphate. The catalysed reaction is (E)-4-coumarate + ATP + H(+) = (E)-4-coumaroyl-AMP + diphosphate. It catalyses the reaction (E)-4-coumaroyl-AMP + CoA = (E)-4-coumaroyl-CoA + AMP + H(+). Its function is as follows. Carboxylate--CoA ligase that may use 4-coumarate as substrate. Follows a two-step reaction mechanism, wherein the carboxylate substrate first undergoes adenylation by ATP, followed by a thioesterification in the presence of CoA to yield the final CoA thioester. The polypeptide is 4-coumarate--CoA ligase-like 2 (Arabidopsis thaliana (Mouse-ear cress)).